We begin with the raw amino-acid sequence, 693 residues long: Auxin response factor 10 (693 aa).

The TF-B3 DNA-binding region spans 115–217 (FAKTLTQSDA…DLCVGIRRAK (103 aa)). A PB1 domain is found at 580-668 (TGHCKVFMES…DIGGDNVRKT (89 aa)).

The protein belongs to the ARF family. Homodimers and heterodimers. Expressed in the whole plant.

It is found in the nucleus. Functionally, auxin response factors (ARFs) are transcriptional factors that bind specifically to the DNA sequence 5'-TGTCTC-3' found in the auxin-responsive promoter elements (AuxREs). Could act as transcriptional activator or repressor. Formation of heterodimers with Aux/IAA proteins may alter their ability to modulate early auxin response genes expression. The polypeptide is Auxin response factor 10 (ARF10) (Arabidopsis thaliana (Mouse-ear cress)).